A 226-amino-acid polypeptide reads, in one-letter code: Ribonuclease 3 (226 aa).

The RNase III domain occupies 7-129 (LPRLCRTLGY…IIGAVYLDSD (123 aa)). Mg(2+) is bound at residue E42. The active site involves D46. Positions 115 and 118 each coordinate Mg(2+). The active site involves E118. Positions 156–226 (DAKTLLQEHL…AAQVLELLKK (71 aa)) constitute a DRBM domain.

This sequence belongs to the ribonuclease III family. As to quaternary structure, homodimer. Mg(2+) is required as a cofactor.

It is found in the cytoplasm. It carries out the reaction Endonucleolytic cleavage to 5'-phosphomonoester.. Functionally, digests double-stranded RNA. Involved in the processing of primary rRNA transcript to yield the immediate precursors to the large and small rRNAs (23S and 16S). Processes some mRNAs, and tRNAs when they are encoded in the rRNA operon. Processes pre-crRNA and tracrRNA of type II CRISPR loci if present in the organism. This Shewanella baltica (strain OS185) protein is Ribonuclease 3.